The chain runs to 201 residues: Small ribosomal subunit protein uS4 (201 aa).

The disordered stretch occupies residues 26–48; that stretch reads LSKKNYPPGQHGNSRKRKTSEYG. One can recognise an S4 RNA-binding domain in the interval 92–155; sequence GRLDNVVFRL…KSLEVIANSL (64 aa).

This sequence belongs to the universal ribosomal protein uS4 family. Part of the 30S ribosomal subunit. Contacts protein S5. The interaction surface between S4 and S5 is involved in control of translational fidelity.

One of the primary rRNA binding proteins, it binds directly to 16S rRNA where it nucleates assembly of the body of the 30S subunit. Its function is as follows. With S5 and S12 plays an important role in translational accuracy. In Bacteroides thetaiotaomicron (strain ATCC 29148 / DSM 2079 / JCM 5827 / CCUG 10774 / NCTC 10582 / VPI-5482 / E50), this protein is Small ribosomal subunit protein uS4.